We begin with the raw amino-acid sequence, 250 residues long: 5-oxoprolinase subunit A 2 (250 aa).

It belongs to the LamB/PxpA family. Forms a complex composed of PxpA, PxpB and PxpC.

It catalyses the reaction 5-oxo-L-proline + ATP + 2 H2O = L-glutamate + ADP + phosphate + H(+). In terms of biological role, catalyzes the cleavage of 5-oxoproline to form L-glutamate coupled to the hydrolysis of ATP to ADP and inorganic phosphate. This is 5-oxoprolinase subunit A 2 from Bordetella bronchiseptica (strain ATCC BAA-588 / NCTC 13252 / RB50) (Alcaligenes bronchisepticus).